Consider the following 340-residue polypeptide: Fructose-1,6-bisphosphatase class 1 (340 aa).

E107, D126, L128, and D129 together coordinate Mg(2+). N215 serves as a coordination point for substrate. E287 lines the Mg(2+) pocket.

Belongs to the FBPase class 1 family. In terms of assembly, homotetramer. The cofactor is Mg(2+).

Its subcellular location is the cytoplasm. The catalysed reaction is beta-D-fructose 1,6-bisphosphate + H2O = beta-D-fructose 6-phosphate + phosphate. It functions in the pathway carbohydrate biosynthesis; gluconeogenesis. The protein is Fructose-1,6-bisphosphatase class 1 of Brucella suis (strain ATCC 23445 / NCTC 10510).